A 196-amino-acid polypeptide reads, in one-letter code: Adenosylcobinamide-phosphate guanylyltransferase (196 aa).

In terms of assembly, homodimer.

The enzyme catalyses adenosylcob(III)inamide phosphate + GTP + H(+) = adenosylcob(III)inamide-GDP + diphosphate. It participates in cofactor biosynthesis; adenosylcobalamin biosynthesis. In terms of biological role, guanylyltransferase that catalyzes the synthesis of adenosylcobinamide-GDP (AdoCbi-GDP) from adenosylcobinamide-phosphate (AdoCbi-P) and GTP. Is involved in adenosylcobalamin biosynthesis. Binds one GTP per dimer. Cannot use other NTPs or GDP. Does not display AdoCbi kinase activity. Is also able to catalyze the condensation of 2-phospho-L-lactate (LP) with GTP in vitro to form PPi and (2S)-lactyl-2-diphospho-5'-guanosine (LPPG), but is much less efficient than CofC, the presumed enzyme catalyzing this reaction in vivo. The polypeptide is Adenosylcobinamide-phosphate guanylyltransferase (cobY) (Methanocaldococcus jannaschii (strain ATCC 43067 / DSM 2661 / JAL-1 / JCM 10045 / NBRC 100440) (Methanococcus jannaschii)).